The primary structure comprises 428 residues: UPF0761 membrane protein TERTU_3006 (428 aa).

The next 7 membrane-spanning stretches (helical) occupy residues 47 to 67, 104 to 124, 143 to 163, 189 to 209, 218 to 238, 248 to 268, and 292 to 312; these read LFAL…IPAF, LSGV…RNIE, YLLY…AFLL, VVPW…VPNC, IGGV…GYIV, GAFA…TIIL, and MIVV…GESV.

This sequence belongs to the UPF0761 family.

Its subcellular location is the cell inner membrane. This Teredinibacter turnerae (strain ATCC 39867 / T7901) protein is UPF0761 membrane protein TERTU_3006.